Consider the following 282-residue polypeptide: MTTRAQAPVGVFDSGLGGLSVLRAIRAELPAESLLYLADSRHAPYGEKSPEYIADRTLRVCEWLVDQGCKALVIACNTATAQAVHVLREKLAVPVIGVEPGLKPAVATSKSRVVGVLATESTLRSEKFARLLAGASGDCKVLSQPGYGLVPLIERGDTHSPAVLELLRAYLQPMLDANADTLVLGCTHYPFLEDAIHEIAGDRLTLIDTGHAVARHLGRTLAAAGLQASGQAATPCFMSTGDVLPLQAMVAALLGEAPMAQRVDIGDAPLSPVAVSLASQPE.

Substrate-binding positions include 13–14 (DS) and 45–46 (YG). The active-site Proton donor/acceptor is the cysteine 76. 77 to 78 (NT) serves as a coordination point for substrate. Cysteine 186 serves as the catalytic Proton donor/acceptor. 187–188 (TH) is a substrate binding site.

The protein belongs to the aspartate/glutamate racemases family.

It carries out the reaction L-glutamate = D-glutamate. The protein operates within cell wall biogenesis; peptidoglycan biosynthesis. Its function is as follows. Provides the (R)-glutamate required for cell wall biosynthesis. The sequence is that of Glutamate racemase from Ralstonia pickettii (strain 12J).